We begin with the raw amino-acid sequence, 365 residues long: UDP-N-acetylglucosamine--N-acetylmuramyl-(pentapeptide) pyrophosphoryl-undecaprenol N-acetylglucosamine transferase (365 aa).

UDP-N-acetyl-alpha-D-glucosamine contacts are provided by residues 11–13 (TGG), Asn124, Arg165, Ser192, Ile246, and Gln291.

The protein belongs to the glycosyltransferase 28 family. MurG subfamily.

It localises to the cell inner membrane. The enzyme catalyses di-trans,octa-cis-undecaprenyl diphospho-N-acetyl-alpha-D-muramoyl-L-alanyl-D-glutamyl-meso-2,6-diaminopimeloyl-D-alanyl-D-alanine + UDP-N-acetyl-alpha-D-glucosamine = di-trans,octa-cis-undecaprenyl diphospho-[N-acetyl-alpha-D-glucosaminyl-(1-&gt;4)]-N-acetyl-alpha-D-muramoyl-L-alanyl-D-glutamyl-meso-2,6-diaminopimeloyl-D-alanyl-D-alanine + UDP + H(+). The protein operates within cell wall biogenesis; peptidoglycan biosynthesis. In terms of biological role, cell wall formation. Catalyzes the transfer of a GlcNAc subunit on undecaprenyl-pyrophosphoryl-MurNAc-pentapeptide (lipid intermediate I) to form undecaprenyl-pyrophosphoryl-MurNAc-(pentapeptide)GlcNAc (lipid intermediate II). In Nitratidesulfovibrio vulgaris (strain DP4) (Desulfovibrio vulgaris), this protein is UDP-N-acetylglucosamine--N-acetylmuramyl-(pentapeptide) pyrophosphoryl-undecaprenol N-acetylglucosamine transferase.